The primary structure comprises 479 residues: Ribosomal RNA small subunit methyltransferase F (479 aa).

S-adenosyl-L-methionine is bound by residues 125–131 (AAAPGSK), Glu-149, Asp-176, and Asp-194. Residue Cys-247 is the Nucleophile of the active site.

Belongs to the class I-like SAM-binding methyltransferase superfamily. RsmB/NOP family.

It is found in the cytoplasm. The enzyme catalyses cytidine(1407) in 16S rRNA + S-adenosyl-L-methionine = 5-methylcytidine(1407) in 16S rRNA + S-adenosyl-L-homocysteine + H(+). Its function is as follows. Specifically methylates the cytosine at position 1407 (m5C1407) of 16S rRNA. The protein is Ribosomal RNA small subunit methyltransferase F of Salmonella paratyphi B (strain ATCC BAA-1250 / SPB7).